The following is a 1671-amino-acid chain: Hybrid signal transduction protein dokA (1671 aa).

Over residues 1 to 10 the composition is skewed to basic and acidic residues; that stretch reads MSSPHIELHS. 6 disordered regions span residues 1-27, 42-89, 126-241, 365-451, 579-603, and 629-651; these read MSSPHIELHSQRTLSPQPSSNNFELTG, DDLN…DKND, QQQQ…RRSS, YSNN…NNEE, HNHNHHNHNHNNTTQRASSTDSPFI, and SNSSSNSNNNSNNASSSNCSSNA. The span at 11–27 shows a compositional bias: polar residues; the sequence is QRTLSPQPSSNNFELTG. Composition is skewed to low complexity over residues 45-83 and 126-167; these read NNNNNNNNNNNNNNNNNNNNNNNNNNNNNNNNNNNNNNN and QQQQ…QQQE. The segment covering 168-179 has biased composition (acidic residues); the sequence is QEQEQEQEQEQE. The segment covering 367–449 has biased composition (low complexity); it reads NNNNNTNTNN…NNNNNNNNNN (83 aa). Positions 591–600 are enriched in polar residues; that stretch reads TTQRASSTDS. The Histidine kinase domain occupies 1050-1276; it reads NISHELRTPC…TFWFAIKVSI (227 aa). Positions 1519–1633 constitute a Response regulatory domain; that stretch reads YILVAEDNDI…RLQKTLSDWI (115 aa).

In terms of processing, under osmotic stress conditions, this protein undergoes phosphorylation at a serine residue in the kinase core, which is not due to an autophosphorylation of dokA. This is in contrast to the classic two-component paradigm, which predicts only histidine and aspartate phosphorylation.

Functionally, part of the osmoregulatory pathway which leads to the increase of intracellular cAMP concentration in response to hyperosmotic stress. Thought to negatively regulate the rdeA-regA pathway by acting as a phosphatase towards the HPt protein rdeA. Has probably no histidine kinase activity. The protein is Hybrid signal transduction protein dokA (dokA) of Dictyostelium discoideum (Social amoeba).